The primary structure comprises 246 residues: DNA repair protein RecO (246 aa).

This sequence belongs to the RecO family.

Its function is as follows. Involved in DNA repair and RecF pathway recombination. The protein is DNA repair protein RecO of Nitrosococcus oceani (strain ATCC 19707 / BCRC 17464 / JCM 30415 / NCIMB 11848 / C-107).